A 488-amino-acid polypeptide reads, in one-letter code: UDP-N-acetylmuramoyl-L-alanyl-D-glutamate--2,6-diaminopimelate ligase (488 aa).

Residues L24, S26, and H41–V43 contribute to the UDP-N-acetyl-alpha-D-muramoyl-L-alanyl-D-glutamate site. Residue G113 to T119 participates in ATP binding. Residues N154, T155–T156, S182, Q188, and R190 each bind UDP-N-acetyl-alpha-D-muramoyl-L-alanyl-D-glutamate. K222 carries the post-translational modification N6-carboxylysine. Meso-2,6-diaminopimelate contacts are provided by residues R386, D410–R413, G461, and E465. Residues D410 to R413 carry the Meso-diaminopimelate recognition motif motif.

It belongs to the MurCDEF family. MurE subfamily. Requires Mg(2+) as cofactor. Post-translationally, carboxylation is probably crucial for Mg(2+) binding and, consequently, for the gamma-phosphate positioning of ATP.

Its subcellular location is the cytoplasm. It carries out the reaction UDP-N-acetyl-alpha-D-muramoyl-L-alanyl-D-glutamate + meso-2,6-diaminopimelate + ATP = UDP-N-acetyl-alpha-D-muramoyl-L-alanyl-gamma-D-glutamyl-meso-2,6-diaminopimelate + ADP + phosphate + H(+). The protein operates within cell wall biogenesis; peptidoglycan biosynthesis. Catalyzes the addition of meso-diaminopimelic acid to the nucleotide precursor UDP-N-acetylmuramoyl-L-alanyl-D-glutamate (UMAG) in the biosynthesis of bacterial cell-wall peptidoglycan. The protein is UDP-N-acetylmuramoyl-L-alanyl-D-glutamate--2,6-diaminopimelate ligase of Haemophilus influenzae (strain PittEE).